Reading from the N-terminus, the 390-residue chain is Lipid-A-disaccharide synthase (390 aa).

The protein belongs to the LpxB family.

It catalyses the reaction a lipid X + a UDP-2-N,3-O-bis[(3R)-3-hydroxyacyl]-alpha-D-glucosamine = a lipid A disaccharide + UDP + H(+). It functions in the pathway bacterial outer membrane biogenesis; LPS lipid A biosynthesis. Its function is as follows. Condensation of UDP-2,3-diacylglucosamine and 2,3-diacylglucosamine-1-phosphate to form lipid A disaccharide, a precursor of lipid A, a phosphorylated glycolipid that anchors the lipopolysaccharide to the outer membrane of the cell. The protein is Lipid-A-disaccharide synthase of Neisseria gonorrhoeae (strain ATCC 700825 / FA 1090).